The primary structure comprises 164 residues: Protein HIT1 (164 aa).

Zn(2+) contacts are provided by cysteine 8, cysteine 11, cysteine 28, and cysteine 32. An HIT-type; degenerate zinc finger spans residues 8-49 (CGICRGVDGKYKCPKCGVRYCSLKCYKDAAKHVHKESEQPRA).

The chain is Protein HIT1 (HIT1) from Saccharomyces cerevisiae (strain ATCC 204508 / S288c) (Baker's yeast).